A 98-amino-acid polypeptide reads, in one-letter code: NADH-ubiquinone oxidoreductase chain 4L (98 aa).

Transmembrane regions (helical) follow at residues 1–21 (MPVVYVNIFLAFIVSLMGLLV), 29–49 (SLLCLEGMMLSLFVMLTVTVL), and 61–81 (IILLVFAACEAALGLSLLVMV).

This sequence belongs to the complex I subunit 4L family. As to quaternary structure, core subunit of respiratory chain NADH dehydrogenase (Complex I) which is composed of 45 different subunits.

The protein localises to the mitochondrion inner membrane. The catalysed reaction is a ubiquinone + NADH + 5 H(+)(in) = a ubiquinol + NAD(+) + 4 H(+)(out). Functionally, core subunit of the mitochondrial membrane respiratory chain NADH dehydrogenase (Complex I) which catalyzes electron transfer from NADH through the respiratory chain, using ubiquinone as an electron acceptor. Part of the enzyme membrane arm which is embedded in the lipid bilayer and involved in proton translocation. In Ursus arctos (Brown bear), this protein is NADH-ubiquinone oxidoreductase chain 4L (MT-ND4L).